Reading from the N-terminus, the 208-residue chain is Microtubule-associated protein Jupiter (208 aa).

Disordered stretches follow at residues 24 to 43 and 82 to 106; these read RPPGGGSSDIFGSEMPQTPR and RGQKTVDSHSRLFGEPTRPITPGKN. The residue at position 30 (serine 30) is a Phosphoserine. A Phosphothreonine modification is found at threonine 41. Basic and acidic residues predominate over residues 82-93; it reads RGQKTVDSHSRL. Threonine 98 and threonine 102 each carry phosphothreonine. 3 positions are modified to phosphoserine: serine 111, serine 139, and serine 150. Residues 132–208 are disordered; it reads HYNGKSGSVS…PPGGYSSGLW (77 aa). Residues 137-150 are compositionally biased toward low complexity; it reads SGSVSSASSSVSSS. Composition is skewed to polar residues over residues 151–165 and 178–189; these read TENLKMNSGSRSEGN and EYSQRQESSNGG.

This sequence belongs to the MAP Jupiter family. In terms of tissue distribution, ubiquitous expression throughout development. Expressed during cell division in the syncytial embryo. Expressed in developing photoreceptors of the eye imaginal disk of the third larval stage. In adults, highly expressed in neurons of the brain, concentrated in axons. In the adult ovaries, expression accumulates in the germarium and the polar follicular cells as well as in the oocyte along the microtubule network.

The protein resides in the nucleus. Its subcellular location is the cytoplasm. It localises to the cytoskeleton. It is found in the spindle. Functionally, binds to all microtubule populations. This chain is Microtubule-associated protein Jupiter, found in Drosophila melanogaster (Fruit fly).